A 360-amino-acid polypeptide reads, in one-letter code: Phospho-N-acetylmuramoyl-pentapeptide-transferase (360 aa).

11 helical membrane-spanning segments follow: residues 2-22, 26-46, 73-93, 97-117, 134-154, 168-188, 199-219, 236-256, 263-283, 288-308, and 339-359; these read LVWV…FQYL, AILG…VMIR, TMGG…WADL, YVLI…VDDW, YFWQ…TAHL, ITLA…VGGS, GLAI…AYLS, TGEL…FLWF, VFMG…VAVI, LVFF…ILQV, and IVRF…TLKI.

The protein belongs to the glycosyltransferase 4 family. MraY subfamily. It depends on Mg(2+) as a cofactor.

The protein resides in the cell inner membrane. The catalysed reaction is UDP-N-acetyl-alpha-D-muramoyl-L-alanyl-gamma-D-glutamyl-meso-2,6-diaminopimeloyl-D-alanyl-D-alanine + di-trans,octa-cis-undecaprenyl phosphate = di-trans,octa-cis-undecaprenyl diphospho-N-acetyl-alpha-D-muramoyl-L-alanyl-D-glutamyl-meso-2,6-diaminopimeloyl-D-alanyl-D-alanine + UMP. The protein operates within cell wall biogenesis; peptidoglycan biosynthesis. Catalyzes the initial step of the lipid cycle reactions in the biosynthesis of the cell wall peptidoglycan: transfers peptidoglycan precursor phospho-MurNAc-pentapeptide from UDP-MurNAc-pentapeptide onto the lipid carrier undecaprenyl phosphate, yielding undecaprenyl-pyrophosphoryl-MurNAc-pentapeptide, known as lipid I. The chain is Phospho-N-acetylmuramoyl-pentapeptide-transferase from Hahella chejuensis (strain KCTC 2396).